Reading from the N-terminus, the 200-residue chain is Recombination protein RecR (200 aa).

The segment at 58-75 (CPTCFCLKSHPESVCSFC) adopts a C4-type zinc-finger fold. Residues 82–177 (SILCIVATPK…SVSRLALGLP (96 aa)) form the Toprim domain.

It belongs to the RecR family.

Functionally, may play a role in DNA repair. It seems to be involved in an RecBC-independent recombinational process of DNA repair. It may act with RecF and RecO. This chain is Recombination protein RecR, found in Chlamydia abortus (strain DSM 27085 / S26/3) (Chlamydophila abortus).